The following is a 69-amino-acid chain: Small, acid-soluble spore protein I (69 aa).

Belongs to the SspI family.

It localises to the spore core. This is Small, acid-soluble spore protein I from Geobacillus kaustophilus (strain HTA426).